A 234-amino-acid polypeptide reads, in one-letter code: MIPYLGPLDLFPPVEMAREDMGGLLAVGGDLQPDRLLDAYRRGIFPWGTVEGQPLWYSPNPRMVLFPEEFRLTRSLKKTLRSGKFEVRFDSNFRGVMANCASTPRPGQDGTWISPEMKHAYTRLHELGWAHSVETYEEGVMVGGLYGLAIGHMFYGESMFSHRTDASKVAFAHLVDYLVNNQFGMIDCQMYTDHLASLGGREIPRDAFQARLSALTASGSPRTVWSTDPLDPAR.

It belongs to the L/F-transferase family.

The protein resides in the cytoplasm. The enzyme catalyses N-terminal L-lysyl-[protein] + L-leucyl-tRNA(Leu) = N-terminal L-leucyl-L-lysyl-[protein] + tRNA(Leu) + H(+). The catalysed reaction is N-terminal L-arginyl-[protein] + L-leucyl-tRNA(Leu) = N-terminal L-leucyl-L-arginyl-[protein] + tRNA(Leu) + H(+). It catalyses the reaction L-phenylalanyl-tRNA(Phe) + an N-terminal L-alpha-aminoacyl-[protein] = an N-terminal L-phenylalanyl-L-alpha-aminoacyl-[protein] + tRNA(Phe). Functions in the N-end rule pathway of protein degradation where it conjugates Leu, Phe and, less efficiently, Met from aminoacyl-tRNAs to the N-termini of proteins containing an N-terminal arginine or lysine. This Dechloromonas aromatica (strain RCB) protein is Leucyl/phenylalanyl-tRNA--protein transferase.